Reading from the N-terminus, the 561-residue chain is Eukaryotic translation initiation factor 3 subunit D-1 (561 aa).

A disordered region spans residues 98 to 164 (VQKPPHQRGR…RGPPPKMRES (67 aa)). Over residues 100-121 (KPPHQRGRFRNMRNSRSGRGRN) the composition is skewed to basic residues. Threonine 128 is subject to Phosphothreonine. The segment at 289-303 (EFDLLTVNETSVEPP) is RNA gate.

The protein belongs to the eIF-3 subunit D family. Component of the eukaryotic translation initiation factor 3 (eIF-3) complex. The eIF-3 complex interacts with pix.

Its subcellular location is the cytoplasm. MRNA cap-binding component of the eukaryotic translation initiation factor 3 (eIF-3) complex, which is involved in protein synthesis of a specialized repertoire of mRNAs and, together with other initiation factors, stimulates binding of mRNA and methionyl-tRNAi to the 40S ribosome. The eIF-3 complex specifically targets and initiates translation of a subset of mRNAs involved in cell proliferation. In the eIF-3 complex, eif3d specifically recognizes and binds the 7-methylguanosine cap of a subset of mRNAs. This chain is Eukaryotic translation initiation factor 3 subunit D-1, found in Drosophila ananassae (Fruit fly).